A 217-amino-acid polypeptide reads, in one-letter code: Small ribosomal subunit protein uS3c (217 aa).

The KH type-2 domain maps to 47 to 119 (VRTHIKSSSN…KLHIAIEKVA (73 aa)).

The protein belongs to the universal ribosomal protein uS3 family. As to quaternary structure, part of the 30S ribosomal subunit.

It is found in the plastid. It localises to the chloroplast. The protein is Small ribosomal subunit protein uS3c (rps3) of Pinus thunbergii (Japanese black pine).